Reading from the N-terminus, the 163-residue chain is Bacterial microcompartment assembly protein PduM (163 aa).

Belongs to the PduM family. In terms of assembly, interacts with shell protein PduK.

It is found in the bacterial microcompartment. The protein operates within polyol metabolism; 1,2-propanediol degradation. Plays an essential role in assembly and/or stability of the bacterial microcompartment (BMC) dedicated to 1,2-propanediol (1,2-PD) degradation. Overexpression impairs BMC formation. Functionally, the 1,2-PD-specific bacterial microcompartment (BMC) concentrates low levels of 1,2-PD catabolic enzymes, concentrates volatile reaction intermediates thus enhancing pathway flux and keeps the level of toxic, mutagenic propionaldehyde low. This is Bacterial microcompartment assembly protein PduM from Salmonella typhimurium (strain LT2 / SGSC1412 / ATCC 700720).